The following is a 705-amino-acid chain: Phosphoribosylformylglycinamidine synthase subunit PurL (705 aa).

The active site involves histidine 32. An ATP-binding site is contributed by tyrosine 35. Glutamate 76 contacts Mg(2+). Substrate contacts are provided by residues 77–80 (SHNH) and arginine 99. Histidine 78 acts as the Proton acceptor in catalysis. Aspartate 100 contributes to the Mg(2+) binding site. Glutamine 224 is a substrate binding site. Aspartate 252 serves as a coordination point for Mg(2+). 296–298 (ESQ) is a binding site for substrate. ATP is bound by residues aspartate 471 and glycine 508. Asparagine 509 contacts Mg(2+). Serine 511 serves as a coordination point for substrate.

Belongs to the FGAMS family. In terms of assembly, monomer. Part of the FGAM synthase complex composed of 1 PurL, 1 PurQ and 2 PurS subunits.

The protein localises to the cytoplasm. It carries out the reaction N(2)-formyl-N(1)-(5-phospho-beta-D-ribosyl)glycinamide + L-glutamine + ATP + H2O = 2-formamido-N(1)-(5-O-phospho-beta-D-ribosyl)acetamidine + L-glutamate + ADP + phosphate + H(+). Its pathway is purine metabolism; IMP biosynthesis via de novo pathway; 5-amino-1-(5-phospho-D-ribosyl)imidazole from N(2)-formyl-N(1)-(5-phospho-D-ribosyl)glycinamide: step 1/2. In terms of biological role, part of the phosphoribosylformylglycinamidine synthase complex involved in the purines biosynthetic pathway. Catalyzes the ATP-dependent conversion of formylglycinamide ribonucleotide (FGAR) and glutamine to yield formylglycinamidine ribonucleotide (FGAM) and glutamate. The FGAM synthase complex is composed of three subunits. PurQ produces an ammonia molecule by converting glutamine to glutamate. PurL transfers the ammonia molecule to FGAR to form FGAM in an ATP-dependent manner. PurS interacts with PurQ and PurL and is thought to assist in the transfer of the ammonia molecule from PurQ to PurL. This Pyrococcus abyssi (strain GE5 / Orsay) protein is Phosphoribosylformylglycinamidine synthase subunit PurL.